Reading from the N-terminus, the 148-residue chain is MQNPTIVIGVIGADCHAVGNKVLDRVFTMHNFSVINLGVMVSQDEYIDAAIETGAQAIVVSSIYGHGEVDCIGMRENCVERGIGEILLYVGGNLVIGKHDFSEIETKFKGMGFNRVFAPDTDLELVCSLMKRDIERVMQSEEAPEGMQ.

The B12-binding domain maps to Asn-3–Ser-140. Adenosylcob(III)alamin is bound by residues Ala-13–Ala-17, His-16, Ser-61–Ile-63, and Asn-93–Gly-97.

This sequence belongs to the methylaspartate mutase GlmS subunit family. Heterotetramer composed of 2 epsilon subunits (GlmE) and 2 sigma subunits (GlmS). GlmE exists as a homodimer and GlmS as a monomer. The cofactor is adenosylcob(III)alamin.

The catalysed reaction is (2S,3S)-3-methyl-L-aspartate = L-glutamate. Its pathway is amino-acid degradation; L-glutamate degradation via mesaconate pathway; acetate and pyruvate from L-glutamate: step 1/4. Its function is as follows. Catalyzes the carbon skeleton rearrangement of L-glutamate to L-threo-3-methylaspartate ((2S,3S)-3-methylaspartate). This is Glutamate mutase sigma subunit from Yersinia enterocolitica serotype O:8 / biotype 1B (strain NCTC 13174 / 8081).